The following is a 23-amino-acid chain: Keratin (23 aa).

In terms of domain architecture, IF rod spans 1 to 23 (YSSQLAQVQGLIGNVESQLAEIR). Positions 1–23 (YSSQLAQVQGLIGNVESQLAEIR) are coil 2.

Belongs to the intermediate filament family.

The polypeptide is Keratin (Cervus elaphus (Red deer)).